A 414-amino-acid chain; its full sequence is S-adenosylmethionine synthase (414 aa).

H11 contacts ATP. Position 13 (D13) interacts with Mg(2+). Residue E39 participates in K(+) binding. Residues E52 and Q95 each coordinate L-methionine. Residues 95 to 105 (QSPDIAQGVNL) form a flexible loop region. Residues 169–171 (DGK), 245–246 (KF), D254, 260–261 (RK), A277, and K281 contribute to the ATP site. Residue D254 participates in L-methionine binding. K285 contributes to the L-methionine binding site.

Belongs to the AdoMet synthase family. As to quaternary structure, homotetramer; dimer of dimers. It depends on Mg(2+) as a cofactor. The cofactor is K(+).

The protein localises to the cytoplasm. The enzyme catalyses L-methionine + ATP + H2O = S-adenosyl-L-methionine + phosphate + diphosphate. Its pathway is amino-acid biosynthesis; S-adenosyl-L-methionine biosynthesis; S-adenosyl-L-methionine from L-methionine: step 1/1. In terms of biological role, catalyzes the formation of S-adenosylmethionine (AdoMet) from methionine and ATP. The overall synthetic reaction is composed of two sequential steps, AdoMet formation and the subsequent tripolyphosphate hydrolysis which occurs prior to release of AdoMet from the enzyme. This is S-adenosylmethionine synthase from Synechococcus sp. (strain JA-3-3Ab) (Cyanobacteria bacterium Yellowstone A-Prime).